The sequence spans 318 residues: Phospholipid scramblase 1 (318 aa).

Over residues 1–14 (MDKQNSQMNASHPE) the composition is skewed to polar residues. Residues 1–64 (MDKQNSQMNA…GPGPAGFPVP (64 aa)) form a disordered region. The proline-rich domain (PRD) stretch occupies residues 1-84 (MDKQNSQMNA…NQPVGAAGVP (84 aa)). Over 1–288 (MDKQNSQMNA…IQFPLDLDVK (288 aa)) the chain is Cytoplasmic. Residues 18-26 (PVGYPPQYP) carry the SH3-binding 1 motif. Short sequence motifs (PPXY motif) lie at residues 22–25 (PPQY) and 33–36 (PPGY). Low complexity predominate over residues 31–44 (QGPPGYSGYPGPQV). An SH3-binding 2 motif is present at residues 42 to 50 (PQVSYPPPP). Phosphotyrosine; by ABL is present on residues Tyr-69 and Tyr-74. The SH3-binding 3 motif lies at 84–92 (PWMPAPQPP). Positions 99–290 (LEYLSQIDQI…FPLDLDVKMK (192 aa)) are interaction with hepatitis C virus E2 glycoprotein. At Thr-161 the chain carries Phosphothreonine; by PKC/PRKCD. 5 S-palmitoyl cysteine lipidation sites follow: Cys-184, Cys-185, Cys-186, Cys-188, and Cys-189. The Nuclear localization signal signature appears at 257–266 (GKISKHWTGI). The chain crosses the membrane as a helical span at residues 289-305 (MKAVMIGACFLIDFMFF). Residues 306–318 (ESTGSQEQKSGVW) lie on the Extracellular side of the membrane.

Belongs to the phospholipid scramblase family. Forms homooligomers in the presence of calcium. Interacts with ABL. Interacts with RELT, RELL1 and RELL2. Interacts with OXSR1 in the presence of RELT. Interacts with TOP2A and TOP2B. Interacts with OCLN. Interacts with TRPC5. Interacts with TRPC1 and TRPC4. Interacts with ILDR1. In terms of assembly, (Microbial infection) Interacts with hepatitis C virus E1 and E2 glycoproteins. As to quaternary structure, (Microbial infection) Interacts with T-cell leukemia virus (HTLV)-1 protein Tax (via N-terminus); this interaction represses Tax homodimerization. (Microbial infection) Interacts with HIV-1 protein Tat; this interaction represses the Tat-dependent transactivation of the HIV-1 long terminal repeat (LTR) and reduces the nuclear translocation of Tat. In terms of assembly, (Microbial infection) Interacts with hepatitis B virus protein HBx; this interaction promotes the proteasomal degradation of HBx. As to quaternary structure, (Microbial infection) Interacts with human cytomegalovirus proteins IE1 and IE2. (Microbial infection) Interacts with Epstein Barr virus (EBV) lytic switch protein BZLF1; this interaction negatively regulates the transcriptional regulatory activity of BZLF1 by preventing the formation of the BZLF1-CBP complex. In terms of assembly, (Microbial infection) Interacts with influenza virus nucleoprotein NP. Ca(2+) serves as cofactor. Requires Mg(2+) as cofactor. It depends on Zn(2+) as a cofactor. Post-translationally, phosphorylation at Thr-161 by PKC/PKCD increases its phospholipid scramblase activity during both cell stimulation and apoptosis. Phosphorylated by OXSR1 in the presence of RELT. Palmitoylation is required for its phospholipid scramblase activity. Palmitoylation regulates its localization to the cell membrane or the nucleus; trafficking to the cell membrane is dependent upon palmitoylation whereas in the absence of palmitoylation, localizes to the nucleus. As to expression, expressed in platelets, erythrocyte membranes, lymphocytes, spleen, thymus, prostate, testis, uterus, intestine, colon, heart, placenta, lung, liver, kidney and pancreas. Not detected in brain and skeletal muscle.

It is found in the cell membrane. Its subcellular location is the nucleus. The protein resides in the cytoplasm. It localises to the perinuclear region. The catalysed reaction is a 1,2-diacyl-sn-glycero-3-phosphocholine(in) = a 1,2-diacyl-sn-glycero-3-phosphocholine(out). The enzyme catalyses a 1,2-diacyl-sn-glycero-3-phosphoethanolamine(in) = a 1,2-diacyl-sn-glycero-3-phosphoethanolamine(out). It catalyses the reaction a 1,2-diacyl-sn-glycero-3-phospho-L-serine(in) = a 1,2-diacyl-sn-glycero-3-phospho-L-serine(out). Activated by Pb(2+) and Hg(2+) ions. Phosphorylation at Thr-161 by PKC/PKCD increases its phospholipid scramblase activity during both cell stimulation and apoptosis. Functionally, catalyzes calcium-induced ATP-independent rapid bidirectional and non-specific movement of phospholipids (lipid scrambling or lipid flip-flop) between the inner and outer leaflet of the plasma membrane resulting in collapse of the phospholipid asymmetry which leads to phosphatidylserine externalization on the cell surface. Mediates calcium-dependent phosphatidylserine externalization and apoptosis in neurons via its association with TRPC5. Also exhibits magnesium-dependent nuclease activity against double-stranded DNA and RNA but not single-stranded DNA and can enhance DNA decatenation mediated by TOP2A. Negatively regulates FcR-mediated phagocytosis in differentiated macrophages. May contribute to cytokine-regulated cell proliferation and differentiation. May play a role in the antiviral response of interferon (IFN) by amplifying and enhancing the IFN response through increased expression of select subset of potent antiviral genes. Inhibits the functions of viral transactivators, including human T-cell leukemia virus (HTLV)-1 protein Tax, human immunodeficiency virus (HIV)-1 Tat, human hepatitis B virus (HBV) HBx, Epstein-Barr virus (EBV) BZLF1 and human cytomegalovirus IE1 and IE2 proteins through direct interactions. Also mediates the inhibition of influenza virus infection by preventing nuclear import of the viral nucleoprotein/NP. Plays a crucial role as a defense factor against SARS-CoV-2 independently of its scramblase activity by directly targeting nascent viral vesicles to prevent virus-membrane fusion and the release of viral RNA into the host-cell cytosol. Its function is as follows. (Microbial infection) Acts as an attachment receptor for HCV. The polypeptide is Phospholipid scramblase 1 (PLSCR1) (Homo sapiens (Human)).